Consider the following 385-residue polypeptide: S-adenosylmethionine synthase (385 aa).

Position 16 (H16) interacts with ATP. D18 contacts Mg(2+). Position 44 (E44) interacts with K(+). L-methionine-binding residues include E57 and Q100. The flexible loop stretch occupies residues 100–110 (QSPDINQGVDR). ATP is bound by residues 164–166 (DGK), 230–231 (KF), D239, 245–246 (RK), A262, and K266. D239 contacts L-methionine. An L-methionine-binding site is contributed by K270.

Belongs to the AdoMet synthase family. As to quaternary structure, homotetramer; dimer of dimers. It depends on Mg(2+) as a cofactor. K(+) serves as cofactor.

It is found in the cytoplasm. The enzyme catalyses L-methionine + ATP + H2O = S-adenosyl-L-methionine + phosphate + diphosphate. It functions in the pathway amino-acid biosynthesis; S-adenosyl-L-methionine biosynthesis; S-adenosyl-L-methionine from L-methionine: step 1/1. In terms of biological role, catalyzes the formation of S-adenosylmethionine (AdoMet) from methionine and ATP. The overall synthetic reaction is composed of two sequential steps, AdoMet formation and the subsequent tripolyphosphate hydrolysis which occurs prior to release of AdoMet from the enzyme. In Helicobacter pylori (strain HPAG1), this protein is S-adenosylmethionine synthase.